Consider the following 235-residue polypeptide: 1-(5-phosphoribosyl)-5-[(5-phosphoribosylamino)methylideneamino] imidazole-4-carboxamide isomerase (235 aa).

Aspartate 8 (proton acceptor) is an active-site residue. Residue aspartate 128 is the Proton donor of the active site.

Belongs to the HisA/HisF family.

Its subcellular location is the cytoplasm. It catalyses the reaction 1-(5-phospho-beta-D-ribosyl)-5-[(5-phospho-beta-D-ribosylamino)methylideneamino]imidazole-4-carboxamide = 5-[(5-phospho-1-deoxy-D-ribulos-1-ylimino)methylamino]-1-(5-phospho-beta-D-ribosyl)imidazole-4-carboxamide. Its pathway is amino-acid biosynthesis; L-histidine biosynthesis; L-histidine from 5-phospho-alpha-D-ribose 1-diphosphate: step 4/9. This is 1-(5-phosphoribosyl)-5-[(5-phosphoribosylamino)methylideneamino] imidazole-4-carboxamide isomerase from Thermus thermophilus (strain ATCC 27634 / DSM 579 / HB8).